The chain runs to 509 residues: Zinc metalloproteinase aureolysin (509 aa).

A signal peptide spans 1-27; that stretch reads MRKFSRYAFTSMATVTLLSSLTPAALA. Positions 28–208 are excised as a propeptide; it reads SDTNHKPATS…VVEKTNLVKE (181 aa). Aspartate 348 serves as a coordination point for Ca(2+). Histidine 352 is a Zn(2+) binding site. The active site involves glutamate 353. The Zn(2+) site is built by histidine 356 and glutamate 376. Ca(2+) is bound by residues aspartate 387, glutamate 389, aspartate 390, leucine 392, glutamate 395, tyrosine 398, threonine 399, lysine 402, and aspartate 405. Histidine 436 functions as the Proton donor in the catalytic mechanism.

It belongs to the peptidase M4 family. In terms of assembly, monomer. Ca(2+) is required as a cofactor. The cofactor is Zn(2+).

It carries out the reaction Cleavage of insulin B chain with specificity similar to that of thermolysin, preferring hydrophobic P1' residues. Activates the glutamyl endopeptidase (EC 3.4.21.19) of Staphylococcus aureus.. Its function is as follows. Plays an essential role in immune evasion by helping bacteria to resist complement-mediated killing by neutrophils. Inhibits the deposition of host C3b on bacterial surfaces and the release of the chemoattractant C5a by cleaving the central complement protein C3. The cleavage site renders the C3b molecule vulnerable to proteolytic degradation by host regulators. Cleaves and inactivates host SERPINA1, which is an endogenous protease inhibitor essential for controlling neutrophil serine protease elastase. Also plays an essential role in the cleavage and subsequent activation of the serine protease SspA (glutamyl endopeptidase) which is involved in colonization and infection of human tissues. The protein is Zinc metalloproteinase aureolysin of Staphylococcus aureus.